The chain runs to 513 residues: 2-isopropylmalate synthase (513 aa).

The Pyruvate carboxyltransferase domain maps to 4-268; the sequence is IKIFDTTLRD…ETGIKTELIY (265 aa). Mn(2+) is bound by residues Asp-13, His-203, His-205, and Asn-239. The segment at 392 to 513 is regulatory domain; that stretch reads KLVHFHVHTG…GLLRKNGGAE (122 aa).

It belongs to the alpha-IPM synthase/homocitrate synthase family. LeuA type 1 subfamily. In terms of assembly, homodimer. Mn(2+) is required as a cofactor.

It localises to the cytoplasm. The enzyme catalyses 3-methyl-2-oxobutanoate + acetyl-CoA + H2O = (2S)-2-isopropylmalate + CoA + H(+). It participates in amino-acid biosynthesis; L-leucine biosynthesis; L-leucine from 3-methyl-2-oxobutanoate: step 1/4. In terms of biological role, catalyzes the condensation of the acetyl group of acetyl-CoA with 3-methyl-2-oxobutanoate (2-ketoisovalerate) to form 3-carboxy-3-hydroxy-4-methylpentanoate (2-isopropylmalate). The protein is 2-isopropylmalate synthase of Thermotoga maritima (strain ATCC 43589 / DSM 3109 / JCM 10099 / NBRC 100826 / MSB8).